A 271-amino-acid chain; its full sequence is Orotidine 5'-phosphate decarboxylase (271 aa).

K97 serves as the catalytic Proton donor.

This sequence belongs to the OMP decarboxylase family. Type 2 subfamily.

It catalyses the reaction orotidine 5'-phosphate + H(+) = UMP + CO2. The protein operates within pyrimidine metabolism; UMP biosynthesis via de novo pathway; UMP from orotate: step 2/2. This Leptospira borgpetersenii serovar Hardjo-bovis (strain JB197) protein is Orotidine 5'-phosphate decarboxylase.